Reading from the N-terminus, the 711-residue chain is Zinc finger CCCH domain-containing protein 32 (711 aa).

The segment covering 1-21 (MEADGAAAAAAAGEASTEAGA) has biased composition (low complexity). Residues 1-23 (MEADGAAAAAAAGEASTEAGARP) form a disordered region. C3H1-type zinc fingers lie at residues 31 to 60 (LRRN…HSDN), 62 to 88 (RMNP…HPPI), and 112 to 139 (GKQL…HGPQ). Disordered stretches follow at residues 221–246 (KSEK…GDHP), 339–376 (RFNG…HSER), 405–561 (SSLA…EGPK), and 573–701 (AAWA…DDDD). Basic and acidic residues-rich tracts occupy residues 364–376 (SERS…HSER) and 413–427 (RNGE…YRER). Positions 428-437 (AHGHRSHRDH) are enriched in basic residues. Basic and acidic residues-rich tracts occupy residues 460–509 (SPDR…RRSS) and 585–594 (KQDKSAEVSH). 2 stretches are compositionally biased toward acidic residues: residues 648-663 (EDII…DADN) and 686-701 (ENAY…DDDD).

In Oryza sativa subsp. japonica (Rice), this protein is Zinc finger CCCH domain-containing protein 32.